Here is a 691-residue protein sequence, read N- to C-terminus: DNA ligase (691 aa).

Residues 41–45, 90–91, and glutamate 130 contribute to the NAD(+) site; these read DAEYD and SL. The active-site N6-AMP-lysine intermediate is the lysine 132. Arginine 153, glutamate 190, lysine 307, and lysine 331 together coordinate NAD(+). 4 residues coordinate Zn(2+): cysteine 425, cysteine 428, cysteine 443, and cysteine 449. Residues 610–691 form the BRCT domain; that stretch reads APQGVLAGKT…LHQLLEGNTR (82 aa).

This sequence belongs to the NAD-dependent DNA ligase family. LigA subfamily. The cofactor is Mg(2+). It depends on Mn(2+) as a cofactor.

The enzyme catalyses NAD(+) + (deoxyribonucleotide)n-3'-hydroxyl + 5'-phospho-(deoxyribonucleotide)m = (deoxyribonucleotide)n+m + AMP + beta-nicotinamide D-nucleotide.. Functionally, DNA ligase that catalyzes the formation of phosphodiester linkages between 5'-phosphoryl and 3'-hydroxyl groups in double-stranded DNA using NAD as a coenzyme and as the energy source for the reaction. It is essential for DNA replication and repair of damaged DNA. In Burkholderia multivorans (strain ATCC 17616 / 249), this protein is DNA ligase.